The primary structure comprises 97 residues: Protein CYSTEINE-RICH TRANSMEMBRANE MODULE 7 (97 aa).

The segment at 1–27 (MASYHVSHDSYQSPGPSPLYQPIIEAP) is disordered. Pro residues predominate over residues 15–27 (GPSPLYQPIIEAP). Residues 68–88 (YVGCFPFLRSCLTTLCCCWFV) form a helical membrane-spanning segment.

This sequence belongs to the CYSTM1 family. Homodimer and heterodimers. Interacts with CYSTM3, CYSTM4, CYSTM5, CYSTM6, CYSTM10, WIH1/CYSTM13 and CYSTM11. Binds weakly to CYSTM1, CYSTM2 and CYSTM12. In terms of tissue distribution, mostly expressed in siliques and, to a lower extent, in stems, roots, leaves and flowers.

The protein resides in the cell membrane. Functionally, involved in resistance to abiotic stress. In Arabidopsis thaliana (Mouse-ear cress), this protein is Protein CYSTEINE-RICH TRANSMEMBRANE MODULE 7.